A 347-amino-acid chain; its full sequence is Quinolinate synthase (347 aa).

Iminosuccinate contacts are provided by H47 and S68. C113 serves as a coordination point for [4Fe-4S] cluster. Iminosuccinate-binding positions include 139–141 and S156; that span reads YAN. [4Fe-4S] cluster is bound at residue C200. Iminosuccinate-binding positions include 226-228 and T243; that span reads HPE. [4Fe-4S] cluster is bound at residue C297.

This sequence belongs to the quinolinate synthase family. Type 1 subfamily. Requires [4Fe-4S] cluster as cofactor.

It localises to the cytoplasm. It carries out the reaction iminosuccinate + dihydroxyacetone phosphate = quinolinate + phosphate + 2 H2O + H(+). It functions in the pathway cofactor biosynthesis; NAD(+) biosynthesis; quinolinate from iminoaspartate: step 1/1. Its function is as follows. Catalyzes the condensation of iminoaspartate with dihydroxyacetone phosphate to form quinolinate. This is Quinolinate synthase from Escherichia coli O7:K1 (strain IAI39 / ExPEC).